We begin with the raw amino-acid sequence, 572 residues long: Hsp70-Hsp90 organizing protein 1 (572 aa).

TPR repeat units follow at residues 2–35, 37–69, and 70–103; these read AEEAKAKGNAAFSSGDFTTAINHFTEAIALAPTN, VLFSNRSAAHASLHQYAEALSDAKETIKLKPYW, and PKGYSRLGAAHLGLNQFELAVTAYKKGLDVDPTN. An STI1 1 domain is found at 133–172; it reads GPEMWTKLTSDPSTRGFLQQPDFVNMMQEIQKNPSSLNLY. Position 167 is a phosphoserine (S167). Residues 189–248 form a disordered region; the sequence is KFRPPPPQGDEAEVPESDMGQSSSNEPEVEKKREPEPEPEPEVTEEKEKKERKEKAKKEK. The segment covering 232 to 248 has biased composition (basic and acidic residues); the sequence is TEEKEKKERKEKAKKEK. The Bipartite nuclear localization signal motif lies at 241-258; it reads KEKAKKEKELGNAAYKKK. TPR repeat units lie at residues 244–277, 279–311, 319–356, 358–382, 383–416, 418–450, and 451–484; these read AKKEKELGNAAYKKKDFETAIQHYSTAIEIDDED, SYLTNRAAVYLEMGKYNECIEDCNKAVERGREL, ARALTRKGTALTKMAKCSKDYEPAIEAFQKALTEHRNP, TLKRLNDAERAKKEWEQKQYFDPKL, GDEEREKGNDFFKEQKYPEAIKHYTEAIKRNPND, KAYSNRAASYTKLGAMPEGLKDAEKCIELDPTF, and SKGYSRKAAVQFFLKEYDNAMETYQAGLEHDPSN. Residues 521-560 enclose the STI1 2 domain; sequence DPEIQNILTDPVMRQVLSDLQENPSAAQKHMQNPMVMNKI.

In terms of assembly, co-chaperone that forms a complex with HSP70 and HSP90 and preproteins (e.g. chloroplast preproteins). Phosphorylated. Post-translationally, acetylated.

The protein localises to the cytoplasm. It is found in the nucleus. Its function is as follows. Mediates the association of the molecular chaperones HSP70 and HSP90. Mediates nuclear encoded chloroplast preproteins binding to HSP90 prior to chloroplastic sorting. This chain is Hsp70-Hsp90 organizing protein 1 (HOP1), found in Arabidopsis thaliana (Mouse-ear cress).